Consider the following 104-residue polypeptide: Ribonuclease P protein component 4 (104 aa).

Cysteine 57, cysteine 60, cysteine 83, and cysteine 86 together coordinate Zn(2+).

It belongs to the eukaryotic/archaeal RNase P protein component 4 family. Consists of a catalytic RNA component and at least 4-5 protein subunits. Zn(2+) serves as cofactor.

It localises to the cytoplasm. It carries out the reaction Endonucleolytic cleavage of RNA, removing 5'-extranucleotides from tRNA precursor.. Its function is as follows. Part of ribonuclease P, a protein complex that generates mature tRNA molecules by cleaving their 5'-ends. In Saccharolobus islandicus (strain M.14.25 / Kamchatka #1) (Sulfolobus islandicus), this protein is Ribonuclease P protein component 4.